The sequence spans 449 residues: MPKAPKTKLHHAPLYKDIAESSESGVLRQKPSKQKKSKESNTGNGFLDAKTSKKILQLAREQKEELDEEENGKPSQISAFISNGHQKDTLENPAIESSYEESEHARNVSDSESITSQEEEEYEELEIDDADRDLFDRFLPTVSGEEGDLTEEKTTSLSDLIMQKINEAEARARGEYIPSAEEEENALPPLPPKVIEVYSKVGVLLSKYRSGKIPKAFKIIPTLSNWEDILYLTRPDMWTPHACYEATRIFISNLKPVQAQHFLTVIILERVRDDIRENKKLNYHLYMALKKALYKPSSWFKGFLFPLVQENCTLREAAIIGSILQKVSVPVLHSAAALLRLTEFDLSGATSVFIRILLDKKYALPYKVLDSLVFYFMRWKSLERPLAVLEHQSMLVFAQRYKFDITPEQKDALLEVVRLKGHYSIGPEIRRELLNSASRGEEIPVEMEY.

Residues 1-13 (MPKAPKTKLHHAP) are compositionally biased toward basic residues. Residues 1-125 (MPKAPKTKLH…SQEEEEYEEL (125 aa)) form a disordered region. Serine 22 carries the phosphoserine modification. The span at 73–84 (KPSQISAFISNG) shows a compositional bias: polar residues. Serine 156 bears the Phosphoserine mark.

This sequence belongs to the bystin family.

This is an uncharacterized protein from Schizosaccharomyces pombe (strain 972 / ATCC 24843) (Fission yeast).